A 456-amino-acid polypeptide reads, in one-letter code: Glycine receptor subunit alpha-4 (456 aa).

The first 27 residues, 1 to 27 (MTTLVPASLFLLLWTLPGKVLLSVALA), serve as a signal peptide directing secretion. At 28 to 256 (KEDVKSGLKG…KFHLERQMGY (229 aa)) the chain is on the extracellular side. An N-linked (GlcNAc...) asparagine glycan is attached at N71. Disulfide bonds link C171/C185 and C232/C243. 236–241 (YNTGKF) provides a ligand contact to strychnine. Residues 257 to 278 (YLIQMYIPSLLIVILSWVSFWI) form a helical membrane-spanning segment. The Cytoplasmic segment spans residues 279–283 (NMDAA). A helical transmembrane segment spans residues 284–304 (PARVGLGITTVLTMTTQSSGS). Over 305–315 (RASLPKVSYVK) the chain is Extracellular. A helical transmembrane segment spans residues 316–336 (AIDIWMAVCLLFVFAALLEYA). The Cytoplasmic portion of the chain corresponds to 337-423 (AVNFVSRQHK…YVDRAKRIDT (87 aa)). A helical transmembrane segment spans residues 424-444 (ISRAVFPFTFLVFNIFYWVVY). Residues 445–456 (KVLRSEDIHQAL) lie on the Extracellular side of the membrane.

The protein belongs to the ligand-gated ion channel (TC 1.A.9) family. Glycine receptor (TC 1.A.9.3) subfamily. GLRA4 sub-subfamily. Homopentamer (in vitro). Heteropentamer composed of GLRA4 and GLRB. In terms of tissue distribution, detected in the retina inner plexiform layer, especially at the border between layer three and four (at protein level).

Its subcellular location is the postsynaptic cell membrane. The protein localises to the synapse. It localises to the perikaryon. The protein resides in the cell projection. It is found in the dendrite. Its subcellular location is the cell membrane. The enzyme catalyses chloride(in) = chloride(out). Inhibited by strychnine. Its function is as follows. Glycine receptors are ligand-gated chloride channels. Channel opening is triggered by extracellular glycine. Channel opening is also triggered by taurine and beta-alanine. Plays a role in the down-regulation of neuronal excitability. Contributes to the generation of inhibitory postsynaptic currents. The polypeptide is Glycine receptor subunit alpha-4 (Glra4) (Mus musculus (Mouse)).